A 513-amino-acid polypeptide reads, in one-letter code: Maturase K (513 aa).

It belongs to the intron maturase 2 family. MatK subfamily.

It localises to the plastid. The protein localises to the chloroplast. Its function is as follows. Usually encoded in the trnK tRNA gene intron. Probably assists in splicing its own and other chloroplast group II introns. The sequence is that of Maturase K from Keckiella cordifolia (Heart-leafed penstemon).